The sequence spans 107 residues: NADH-quinone oxidoreductase subunit K (107 aa).

Helical transmembrane passes span 11-31, 36-56, and 67-87; these read LTHY…GVLL, IVLL…FVAF, and IMVF…LALA.

Belongs to the complex I subunit 4L family. In terms of assembly, NDH-1 is composed of 14 different subunits. Subunits NuoA, H, J, K, L, M, N constitute the membrane sector of the complex.

The protein resides in the cell inner membrane. It catalyses the reaction a quinone + NADH + 5 H(+)(in) = a quinol + NAD(+) + 4 H(+)(out). In terms of biological role, NDH-1 shuttles electrons from NADH, via FMN and iron-sulfur (Fe-S) centers, to quinones in the respiratory chain. The immediate electron acceptor for the enzyme in this species is believed to be ubiquinone. Couples the redox reaction to proton translocation (for every two electrons transferred, four hydrogen ions are translocated across the cytoplasmic membrane), and thus conserves the redox energy in a proton gradient. This Bdellovibrio bacteriovorus (strain ATCC 15356 / DSM 50701 / NCIMB 9529 / HD100) protein is NADH-quinone oxidoreductase subunit K.